Here is an 87-residue protein sequence, read N- to C-terminus: Large ribosomal subunit protein bL27 (87 aa).

The protein belongs to the bacterial ribosomal protein bL27 family.

The polypeptide is Large ribosomal subunit protein bL27 (Pseudarthrobacter chlorophenolicus (strain ATCC 700700 / DSM 12829 / CIP 107037 / JCM 12360 / KCTC 9906 / NCIMB 13794 / A6) (Arthrobacter chlorophenolicus)).